Consider the following 309-residue polypeptide: Ribonuclease Z (309 aa).

Zn(2+)-binding residues include histidine 63, histidine 65, aspartate 67, histidine 68, histidine 141, aspartate 208, and histidine 266. The active-site Proton acceptor is aspartate 67.

Belongs to the RNase Z family. Homodimer. Zn(2+) serves as cofactor.

The catalysed reaction is Endonucleolytic cleavage of RNA, removing extra 3' nucleotides from tRNA precursor, generating 3' termini of tRNAs. A 3'-hydroxy group is left at the tRNA terminus and a 5'-phosphoryl group is left at the trailer molecule.. In terms of biological role, zinc phosphodiesterase, which displays some tRNA 3'-processing endonuclease activity. Probably involved in tRNA maturation, by removing a 3'-trailer from precursor tRNA. The chain is Ribonuclease Z from Salinispora arenicola (strain CNS-205).